We begin with the raw amino-acid sequence, 288 residues long: Oxaloacetate decarboxylase (288 aa).

A substrate-binding site is contributed by Ser-47. Residue Asp-85 coordinates Mg(2+). Substrate is bound by residues Arg-156 and His-232.

It belongs to the isocitrate lyase/PEP mutase superfamily. Oxaloacetate decarboxylase family. As to quaternary structure, homotetramer; dimer of dimers. Mg(2+) is required as a cofactor.

The enzyme catalyses oxaloacetate + H(+) = pyruvate + CO2. In terms of biological role, catalyzes the decarboxylation of oxaloacetate into pyruvate. Seems to play a role in maintaining cellular concentrations of bicarbonate and pyruvate. In Bradyrhizobium sp. (strain ORS 278), this protein is Oxaloacetate decarboxylase.